Here is a 189-residue protein sequence, read N- to C-terminus: Heme-binding protein 1 (189 aa).

The protein belongs to the HEBP family. Monomer.

The protein localises to the cytoplasm. Functionally, may bind free porphyrinogens that may be present in the cell and thus facilitate removal of these potentially toxic compound. Binds with a high affinity to one molecule of heme or porphyrins. It binds metalloporphyrins, free porphyrins and N-methylprotoporphyrin with similar affinities. This Sus scrofa (Pig) protein is Heme-binding protein 1 (HEBP1).